Here is a 299-residue protein sequence, read N- to C-terminus: Tetrahydromethanopterin S-methyltransferase subunit E (299 aa).

6 helical membrane-spanning segments follow: residues 57 to 79 (AISG…AWAL), 89 to 111 (AIIV…AFLG), 132 to 154 (HIGP…AYLA), 164 to 183 (LPLV…SSTG), 227 to 246 (FCSR…IIFL), and 261 to 283 (LVTK…AVIN).

The protein belongs to the MtrE family. In terms of assembly, the complex is composed of 8 subunits; MtrA, MtrB, MtrC, MtrD, MtrE, MtrF, MtrG and MtrH.

Its subcellular location is the cell membrane. The catalysed reaction is 5-methyl-5,6,7,8-tetrahydromethanopterin + coenzyme M + 2 Na(+)(in) = 5,6,7,8-tetrahydromethanopterin + methyl-coenzyme M + 2 Na(+)(out). It participates in one-carbon metabolism; methanogenesis from CO(2); methyl-coenzyme M from 5,10-methylene-5,6,7,8-tetrahydromethanopterin: step 2/2. In terms of biological role, part of a complex that catalyzes the formation of methyl-coenzyme M and tetrahydromethanopterin from coenzyme M and methyl-tetrahydromethanopterin. This is an energy-conserving, sodium-ion translocating step. The chain is Tetrahydromethanopterin S-methyltransferase subunit E from Methanococcus maripaludis (strain DSM 14266 / JCM 13030 / NBRC 101832 / S2 / LL).